The sequence spans 153 residues: Pheromone-binding protein Gp-9 (153 aa).

The first 19 residues, 1–19 (MKTFVLHIFIFALVAFASA), serve as a signal peptide directing secretion. Cystine bridges form between Cys37/Cys77, Cys73/Cys129, and Cys118/Cys138.

This sequence belongs to the PBP/GOBP family. As to quaternary structure, homodimer.

It is found in the secreted. Functionally, colony queen number, a major feature of social organization, is associated with worker genotype for Gp-9. Colonies are headed by either a single reproductive queen (monogyne form) or multiple queens (polygyne form). Differences in worker Gp-9 genotypes between social forms may cause differences in workers' abilities to recognize queens and regulate their numbers. The protein is Pheromone-binding protein Gp-9 of Solenopsis electra (Fire ant).